Reading from the N-terminus, the 608-residue chain is Pentatricopeptide repeat-containing protein At5g40410, mitochondrial (608 aa).

The N-terminal 28 residues, M1–H28, are a transit peptide targeting the mitochondrion. 11 PPR repeats span residues L30 to R64, H65 to R95, D96 to F130, N133 to E167, E168 to K198, N199 to P233, D234 to G268, N269 to P299, D300 to P334, D335 to R365, and R371 to E401. The type E motif stretch occupies residues V406–G481. Residues N482–K512 are type E(+) motif. A type DYW motif region spans residues E514–W608.

The protein belongs to the PPR family. PCMP-H subfamily.

Its subcellular location is the mitochondrion. In Arabidopsis thaliana (Mouse-ear cress), this protein is Pentatricopeptide repeat-containing protein At5g40410, mitochondrial (PCMP-H15).